A 229-amino-acid chain; its full sequence is Prolactin (229 aa).

Positions 1–30 are cleaved as a signal peptide; it reads MDNKGWSLKGSLLPLLLLVSDLLLCQGVTS. An intrachain disulfide couples Cys-34 to Cys-41. 3 positions are modified to phosphoserine: Ser-56, Ser-64, and Ser-120. 2 cysteine pairs are disulfide-bonded: Cys-88–Cys-204 and Cys-221–Cys-229.

This sequence belongs to the somatotropin/prolactin family. Interacts with PRLR.

It localises to the secreted. Functionally, prolactin acts primarily on the mammary gland by promoting lactation. The protein is Prolactin (PRL) of Neovison vison (American mink).